Consider the following 307-residue polypeptide: Universal stress protein A family protein C25B2.10 (307 aa).

Positions 1–63 (MSESAPAGSK…RSSMEQPTFR (63 aa)) are disordered. Over residues 21–30 (PEPRTSKDQQ) the composition is skewed to basic and acidic residues. The residue at position 44 (Ser44) is a Phosphoserine. Thr48 bears the Phosphothreonine mark. Ser98 and Ser102 each carry phosphoserine.

The protein belongs to the universal stress protein A family.

It localises to the barrier septum. It is found in the cell tip. The polypeptide is Universal stress protein A family protein C25B2.10 (Schizosaccharomyces pombe (strain 972 / ATCC 24843) (Fission yeast)).